Reading from the N-terminus, the 608-residue chain is Protein SHQ1 homolog (608 aa).

Disordered regions lie at residues 487–531 (DAGS…SFYS) and 543–608 (IVYE…ASTT). The span at 489-498 (GSQGSSPQQQ) shows a compositional bias: low complexity. 2 stretches are compositionally biased toward acidic residues: residues 502–524 (DDLD…DESV) and 543–579 (IVYE…EDDS). Residues 588–608 (EAEGNSVIEQCSNSETAASTT) show a composition bias toward polar residues.

It belongs to the SHQ1 family.

Its function is as follows. Required for the quantitative accumulation of H/ACA ribonucleoproteins (RNPs). The protein is Protein SHQ1 homolog of Drosophila melanogaster (Fruit fly).